The primary structure comprises 500 residues: Arabinofuranosidase/B-xylosidase (500 aa).

A signal peptide spans 1 to 21 (MLSNARIIAAGCIAAGSLVAA). N467 carries an N-linked (GlcNAc...) asparagine glycan.

The protein belongs to the glycosyl hydrolase 54 family.

The enzyme catalyses Hydrolysis of terminal non-reducing alpha-L-arabinofuranoside residues in alpha-L-arabinosides.. The catalysed reaction is Hydrolysis of (1-&gt;4)-beta-D-xylans, to remove successive D-xylose residues from the non-reducing termini.. The polypeptide is Arabinofuranosidase/B-xylosidase (xyl1) (Trichoderma koningii (Hypocrea koningii)).